Consider the following 246-residue polypeptide: tRNA (guanine-N(1)-)-methyltransferase (246 aa).

Residues Gly-114 and 134–139 (IGDYIL) contribute to the S-adenosyl-L-methionine site.

This sequence belongs to the RNA methyltransferase TrmD family. In terms of assembly, homodimer.

The protein resides in the cytoplasm. It catalyses the reaction guanosine(37) in tRNA + S-adenosyl-L-methionine = N(1)-methylguanosine(37) in tRNA + S-adenosyl-L-homocysteine + H(+). Its function is as follows. Specifically methylates guanosine-37 in various tRNAs. This is tRNA (guanine-N(1)-)-methyltransferase from Coxiella burnetii (strain CbuG_Q212) (Coxiella burnetii (strain Q212)).